Here is a 340-residue protein sequence, read N- to C-terminus: tRNA N6-adenosine threonylcarbamoyltransferase (340 aa).

Positions 111 and 115 each coordinate Fe cation. Residues 133-137 (VVSGG), Asp166, Gly179, Asp183, and Asn273 contribute to the substrate site. Asp301 is a Fe cation binding site.

Belongs to the KAE1 / TsaD family. It depends on Fe(2+) as a cofactor.

Its subcellular location is the cytoplasm. The catalysed reaction is L-threonylcarbamoyladenylate + adenosine(37) in tRNA = N(6)-L-threonylcarbamoyladenosine(37) in tRNA + AMP + H(+). Functionally, required for the formation of a threonylcarbamoyl group on adenosine at position 37 (t(6)A37) in tRNAs that read codons beginning with adenine. Is involved in the transfer of the threonylcarbamoyl moiety of threonylcarbamoyl-AMP (TC-AMP) to the N6 group of A37, together with TsaE and TsaB. TsaD likely plays a direct catalytic role in this reaction. The protein is tRNA N6-adenosine threonylcarbamoyltransferase of Pelobacter propionicus (strain DSM 2379 / NBRC 103807 / OttBd1).